We begin with the raw amino-acid sequence, 359 residues long: 3-dehydroquinate synthase (359 aa).

Residues 71–76, 105–109, 129–130, Lys-142, Lys-151, and 169–172 each bind NAD(+); these read DGEQFK, GVIGD, TT, and CLQT. Residues Glu-184, His-247, and His-264 each contribute to the Zn(2+) site.

It belongs to the sugar phosphate cyclases superfamily. Dehydroquinate synthase family. Co(2+) is required as a cofactor. Zn(2+) serves as cofactor. Requires NAD(+) as cofactor.

The protein resides in the cytoplasm. The enzyme catalyses 7-phospho-2-dehydro-3-deoxy-D-arabino-heptonate = 3-dehydroquinate + phosphate. It functions in the pathway metabolic intermediate biosynthesis; chorismate biosynthesis; chorismate from D-erythrose 4-phosphate and phosphoenolpyruvate: step 2/7. Catalyzes the conversion of 3-deoxy-D-arabino-heptulosonate 7-phosphate (DAHP) to dehydroquinate (DHQ). The protein is 3-dehydroquinate synthase of Shewanella sp. (strain MR-4).